A 261-amino-acid polypeptide reads, in one-letter code: Glucosamine-6-phosphate deaminase (261 aa).

Asp-67 (proton acceptor; for enolization step) is an active-site residue. Catalysis depends on Asn-136, which acts as the For ring-opening step. The active-site Proton acceptor; for ring-opening step is His-138. Catalysis depends on Glu-143, which acts as the For ring-opening step.

This sequence belongs to the glucosamine/galactosamine-6-phosphate isomerase family. NagB subfamily.

The catalysed reaction is alpha-D-glucosamine 6-phosphate + H2O = beta-D-fructose 6-phosphate + NH4(+). It functions in the pathway amino-sugar metabolism; N-acetylneuraminate degradation; D-fructose 6-phosphate from N-acetylneuraminate: step 5/5. In terms of biological role, catalyzes the reversible isomerization-deamination of glucosamine 6-phosphate (GlcN6P) to form fructose 6-phosphate (Fru6P) and ammonium ion. The polypeptide is Glucosamine-6-phosphate deaminase (Cutibacterium acnes (strain DSM 16379 / KPA171202) (Propionibacterium acnes)).